Here is a 47-residue protein sequence, read N- to C-terminus: MRNDVLTLTNPMEEKELEQILGGGNGVLKTISHECNMNTWQFLFTCC.

A signal peptide spans 1 to 23 (MRNDVLTLTNPMEEKELEQILGG). Residues Thr30 and Thr39 each carry the 2,3-didehydrobutyrine modification. Residues 30-35 (TISHEC) constitute a cross-link (beta-methyllanthionine (Thr-Cys)). Residues 32–46 (SHECNMNTWQFLFTC) constitute a cross-link (lanthionine (Ser-Cys)). Residues 45-47 (TCC) constitute a cross-link (beta-methyllanthionine (Thr-Cys)).

In terms of processing, maturation of lantibiotics involves the enzymatic conversion of Thr, and Ser into dehydrated AA and the formation of thioether bonds with cysteine. This is followed by membrane translocation and cleavage of the modified precursor. It is not established whether the 2,3-didehydrobutyrine is the E- or Z-isomer.

The protein localises to the secreted. Lanthionine-containing peptide antibiotic (lantibiotic) active on Gram-positive bacteria. The bactericidal activity of lantibiotics is based on depolarization of energized bacterial cytoplasmic membranes, initiated by the formation of aqueous transmembrane pores. Ruminococcin A is a broad spectrum bacteriocin exhibiting activity against a wide range of pathogenic clostridia and B.longum. The chain is Ruminococcin-A (rumA1) from Mediterraneibacter gnavus (Ruminococcus gnavus).